The sequence spans 286 residues: Inositol polyphosphate multikinase alpha (286 aa).

Residues 1–22 (MQLKVPEHQVAGHIAKDGKPGP) are disordered.

The protein belongs to the inositol phosphokinase (IPK) family. Post-translationally, phosphorylated. As to expression, detected in leaves, stems, roots, siliques and flowers. Highly expressed in root tissues, anthers, the stigma, pollen grains and growing pollen tubes.

The protein resides in the nucleus. The protein localises to the cell membrane. The enzyme catalyses 1D-myo-inositol 1,4,5-trisphosphate + 2 ATP = 1D-myo-inositol 1,3,4,5,6-pentakisphosphate + 2 ADP + 2 H(+). It catalyses the reaction 1D-myo-inositol 1,3,4,6-tetrakisphosphate + ATP = 1D-myo-inositol 1,3,4,5,6-pentakisphosphate + ADP + H(+). Functionally, inositol phosphate kinase with a broad substrate specificity. Phosphorylates inositol 1,4,5-trisphosphate (Ins(1,4,5)P3), inositol 1,4,5,6-tetrakisphosphate (Ins(1,4,5,6)P4), inositol 1,3,4,5-tetrakisphosphate (Ins(1,3,4,5)P4), inositol 1,3,4,6-tetrakisphosphate (Ins(1,3,4,6)P4) and inositol 1,2,3,4,6-pentakisphosphate (Ins(1,2,3,4,6)P5) but not inositol 1,4-bisphosphate (Ins(1,4)P2), inositol 1,3,4-trisphosphate (Ins(1,3,4)P3), inositol 1,2,6-trisphosphate (Ins(1,2,6)P3), inositol 3,4,5,6-tetrakisphosphate (Ins(3,4,5,6)P4), inositol 1,3,4,5,6-pentakisphosphate (Ins(1,3,4,5,6)P5), inositol 1,2,4,5,6-pentakisphosphate (Ins(1,2,4,5,6)P5) or inositol hexakisphosphate (InsP6). Regulates pollen and root development probably through the regulation of InsP3-mediated calcium accumulation. This chain is Inositol polyphosphate multikinase alpha (IPK2a), found in Arabidopsis thaliana (Mouse-ear cress).